The primary structure comprises 394 residues: 1-deoxy-D-xylulose 5-phosphate reductoisomerase (394 aa).

7 residues coordinate NADPH: threonine 12, glycine 13, serine 14, isoleucine 15, lysine 39, glutamine 40, and asparagine 126. Residue lysine 127 participates in 1-deoxy-D-xylulose 5-phosphate binding. Residue glutamate 128 participates in NADPH binding. Aspartate 152 serves as a coordination point for Mn(2+). 1-deoxy-D-xylulose 5-phosphate is bound by residues serine 153, glutamate 154, serine 183, and histidine 206. Glutamate 154 contributes to the Mn(2+) binding site. Glycine 212 provides a ligand contact to NADPH. The 1-deoxy-D-xylulose 5-phosphate site is built by serine 219, asparagine 224, lysine 225, and glutamate 228. Glutamate 228 is a binding site for Mn(2+).

This sequence belongs to the DXR family. Requires Mg(2+) as cofactor. Mn(2+) serves as cofactor.

The catalysed reaction is 2-C-methyl-D-erythritol 4-phosphate + NADP(+) = 1-deoxy-D-xylulose 5-phosphate + NADPH + H(+). Its pathway is isoprenoid biosynthesis; isopentenyl diphosphate biosynthesis via DXP pathway; isopentenyl diphosphate from 1-deoxy-D-xylulose 5-phosphate: step 1/6. Functionally, catalyzes the NADPH-dependent rearrangement and reduction of 1-deoxy-D-xylulose-5-phosphate (DXP) to 2-C-methyl-D-erythritol 4-phosphate (MEP). The protein is 1-deoxy-D-xylulose 5-phosphate reductoisomerase of Neisseria meningitidis serogroup B (strain ATCC BAA-335 / MC58).